The following is a 348-amino-acid chain: NFSTPLNEYEEGSYESAGYTVLRILPLVVLGVTFVLGVLGNGLVIWVAGFRMTRTVTTICYLNLALADFSFTATLPFLIVSMAMGEKWPFGWFLCKLIHIVVDINLFGSVFLIGFIALDRCICVLHPVWAQNHRTVSLAMKVIVGPWILALVLTLPVFLFLTTVTIPNGDTYCTFNFASWGGTPEERLKVAITLLTARGIIRFVIGFSLPMSIVAICYGLIAAKIHKKGMIKSSRPLRVLTAVVASFFICWFPFQLVALLGTVWLKEMLFYGKYKIIDILVNPTSSLAFFNCCLNPMLYVFVGQDFRERLIHSLPTSLERALSEDSAPTNDTAANCASPPAETELQAM.

The N-linked (GlcNAc...) asparagine glycan is linked to N1. Residues 1 to 24 (NFSTPLNEYEEGSYESAGYTVLRI) lie on the Extracellular side of the membrane. A helical membrane pass occupies residues 25-47 (LPLVVLGVTFVLGVLGNGLVIWV). Residues 48–58 (AGFRMTRTVTT) lie on the Cytoplasmic side of the membrane. Residues 59 to 80 (ICYLNLALADFSFTATLPFLIV) traverse the membrane as a helical segment. At 81–97 (SMAMGEKWPFGWFLCKL) the chain is on the extracellular side. Residues C95 and C173 are joined by a disulfide bond. The helical transmembrane segment at 98-118 (IHIVVDINLFGSVFLIGFIAL) threads the bilayer. The Cytoplasmic portion of the chain corresponds to 119–137 (DRCICVLHPVWAQNHRTVS). Residues 138–159 (LAMKVIVGPWILALVLTLPVFL) traverse the membrane as a helical segment. At 160-202 (FLTTVTIPNGDTYCTFNFASWGGTPEERLKVAITLLTARGIIR) the chain is on the extracellular side. The helical transmembrane segment at 203-223 (FVIGFSLPMSIVAICYGLIAA) threads the bilayer. The Cytoplasmic portion of the chain corresponds to 224 to 239 (KIHKKGMIKSSRPLRV). Residues 240–263 (LTAVVASFFICWFPFQLVALLGTV) form a helical membrane-spanning segment. Topologically, residues 264–283 (WLKEMLFYGKYKIIDILVNP) are extracellular. The helical transmembrane segment at 284 to 303 (TSSLAFFNCCLNPMLYVFVG) threads the bilayer. At 304-348 (QDFRERLIHSLPTSLERALSEDSAPTNDTAANCASPPAETELQAM) the chain is on the cytoplasmic side. Residues 322-348 (LSEDSAPTNDTAANCASPPAETELQAM) form a disordered region. Over residues 326 to 335 (SAPTNDTAAN) the composition is skewed to polar residues.

This sequence belongs to the G-protein coupled receptor 1 family. As to quaternary structure, interacts with Amyloid-beta protein 42, product of APP; the interaction takes place at the cell surface and the complex is then rapidly internalized.

It is found in the cell membrane. Functionally, low affinity receptor for N-formyl-methionyl peptides, which are powerful neutrophil chemotactic factors. Binding of FMLP to the receptor causes activation of neutrophils. This response is mediated via a G-protein that activates a phosphatidylinositol-calcium second messenger system. Receptor for the chemokine-like protein FAM19A5, mediating FAM19A5-stimulated macrophage chemotaxis and the inhibitory effect on TNFSF11/RANKL-induced osteoclast differentiation. The chain is N-formyl peptide receptor 2 (FPR2) from Pan troglodytes (Chimpanzee).